The following is a 492-amino-acid chain: Endoglucanase 15 (492 aa).

A signal peptide spans Met1–Ala30. Asp86 serves as the catalytic Nucleophile. Residues His414, Asp466, and Glu475 contribute to the active site.

It belongs to the glycosyl hydrolase 9 (cellulase E) family.

The protein localises to the secreted. The catalysed reaction is Endohydrolysis of (1-&gt;4)-beta-D-glucosidic linkages in cellulose, lichenin and cereal beta-D-glucans.. The polypeptide is Endoglucanase 15 (Arabidopsis thaliana (Mouse-ear cress)).